Consider the following 161-residue polypeptide: Transcriptional repressor NrdR (161 aa).

Residues M1–S11 are compositionally biased toward basic residues. Residues M1 to G21 form a disordered region. A zinc finger lies at C3–C34. The ATP-cone domain occupies V49–D139.

Belongs to the NrdR family. Zn(2+) is required as a cofactor.

In terms of biological role, negatively regulates transcription of bacterial ribonucleotide reductase nrd genes and operons by binding to NrdR-boxes. This is Transcriptional repressor NrdR from Synechocystis sp. (strain ATCC 27184 / PCC 6803 / Kazusa).